A 671-amino-acid chain; its full sequence is tRNA(Met) cytidine acetyltransferase TmcA (671 aa).

Residues Gln180, 202–211 (GRGKSALAGQ), and Arg319 contribute to the ATP site. Positions 356–531 (QTLWRSEPET…SGCYTAMALL (176 aa)) constitute an N-acetyltransferase domain. Residues 461 to 463 (IAV), 468 to 474 (QREGTGR), Glu499, and Arg506 contribute to the acetyl-CoA site.

It belongs to the RNA cytidine acetyltransferase family. TmcA subfamily.

The protein localises to the cytoplasm. The catalysed reaction is cytidine(34) in elongator tRNA(Met) + acetyl-CoA + ATP + H2O = N(4)-acetylcytidine(34) in elongator tRNA(Met) + ADP + phosphate + CoA + H(+). Functionally, catalyzes the formation of N(4)-acetylcytidine (ac(4)C) at the wobble position of tRNA(Met), by using acetyl-CoA as an acetyl donor and ATP (or GTP). This Shigella flexneri serotype 5b (strain 8401) protein is tRNA(Met) cytidine acetyltransferase TmcA.